The following is a 198-amino-acid chain: uncharacterized protein (198 aa).

The stretch at 20 to 58 (ERVRRDEELARLSADKEQAKNDLEESKRRIARLRGTVYE) forms a coiled coil. Residues 144 to 198 (LSNRKTKNPESDRRRQSRKKKSTQIQASDEMKHRRHHVHKVHHYSQKQSSSTTRR) are disordered. A compositionally biased stretch (basic residues) spans 176–188 (HRRHHVHKVHHYS). Over residues 189–198 (QKQSSSTTRR) the composition is skewed to polar residues.

It localises to the nucleus. Its subcellular location is the nucleolus. This is an uncharacterized protein from Schizosaccharomyces pombe (strain 972 / ATCC 24843) (Fission yeast).